We begin with the raw amino-acid sequence, 220 residues long: MEVALLSFSSSLSPLCHQRISTLTPKTSNSPNYPRLPVIRSAVSRNKKEETVEAVKSHLENCHLLAAINYKGLTVKQFQDLRRTLPDTTKLIVAKNTLVFKAIEGTKWEALKPCMKGMNAWLFVQTDEIPSAIKPYRSFQKERKLENNDFAGAVFEGKFYAPDNFKVLETMPTRAEVYAKMLGALQSPAINLVTTLQAPAREVIMVLMAYIKKLEDESNA.

Residues 1-41 (MEVALLSFSSSLSPLCHQRISTLTPKTSNSPNYPRLPVIRS) constitute a chloroplast transit peptide.

The protein belongs to the universal ribosomal protein uL10 family. Part of the 50S ribosomal subunit.

It is found in the plastid. It localises to the chloroplast. Its function is as follows. This protein binds directly to 23S ribosomal RNA. The protein is Large ribosomal subunit protein uL10c (RPL10) of Arabidopsis thaliana (Mouse-ear cress).